The chain runs to 275 residues: NADPH-dependent 7-cyano-7-deazaguanine reductase (275 aa).

A substrate-binding site is contributed by 81–83; sequence IES. 83-84 is an NADPH binding site; the sequence is SK. Residue C181 is the Thioimide intermediate of the active site. The active-site Proton donor is the D188. A substrate-binding site is contributed by 220-221; sequence HE. Residue 249-250 coordinates NADPH; the sequence is RG.

This sequence belongs to the GTP cyclohydrolase I family. QueF type 2 subfamily. As to quaternary structure, homodimer.

Its subcellular location is the cytoplasm. It catalyses the reaction 7-aminomethyl-7-carbaguanine + 2 NADP(+) = 7-cyano-7-deazaguanine + 2 NADPH + 3 H(+). It participates in tRNA modification; tRNA-queuosine biosynthesis. Catalyzes the NADPH-dependent reduction of 7-cyano-7-deazaguanine (preQ0) to 7-aminomethyl-7-deazaguanine (preQ1). The chain is NADPH-dependent 7-cyano-7-deazaguanine reductase from Xylella fastidiosa (strain 9a5c).